A 394-amino-acid polypeptide reads, in one-letter code: Na(+)/H(+) antiporter NhaA (394 aa).

The next 11 helical transmembrane spans lie at 14–34, 59–79, 95–115, 125–145, 155–175, 177–197, 204–224, 258–278, 292–312, 328–348, and 362–382; these read AGGILLLIAALLAMLCANSVF, LLMWINDGFMAVFFILVGMEV, IFPAFAAIGGMVVPALIYWFI, GWAIPMATDIAFALGIVALLS, FLLALAIIDDIGAIIVIALFF, NELSMLALIIASIAIMILITM, GIIHYVIVGTILWASVLKSGV, WCAFAILPLFAFSNAGVSLAG, ITLGLLIGKPVGVFSFCYLAV, VFAIAVLCGIGFTMSVFIAGL, and LSRLGILIGTSIAAIVGYILL.

The protein belongs to the NhaA Na(+)/H(+) (TC 2.A.33) antiporter family.

The protein localises to the cell inner membrane. The enzyme catalyses Na(+)(in) + 2 H(+)(out) = Na(+)(out) + 2 H(+)(in). In terms of biological role, na(+)/H(+) antiporter that extrudes sodium in exchange for external protons. This is Na(+)/H(+) antiporter NhaA from Haemophilus ducreyi (strain 35000HP / ATCC 700724).